The following is a 584-amino-acid chain: PE-PGRS family protein PE_PGRS11 (584 aa).

Positions 1 to 92 (MSFVIVARDA…AATSYAVTEV (92 aa)) constitute a PE domain. Residue His290 is the Tele-phosphohistidine intermediate of the active site. Glu365 serves as the catalytic Proton donor/acceptor. The tract at residues 384–584 (YLVGPIAWTL…LPIGLPSLIP (201 aa)) is phosphoglycerate mutase.

It in the N-terminal section; belongs to the mycobacterial PE family. PGRS subfamily. This sequence in the C-terminal section; belongs to the phosphoglycerate mutase family. In terms of assembly, interacts with human TLR2. The cofactor is Mg(2+).

The protein localises to the secreted. It is found in the cell wall. It localises to the cell surface. It carries out the reaction (2R)-2-phosphoglycerate = (2R)-3-phosphoglycerate. In terms of biological role, induces maturation and activation of human dendritic cells (DCs), via TLR2-dependent activation of ERK1/2, p38 MAPK, and NF-kappa-B signaling pathways, and enhances the ability of DCs to stimulate CD4(+) T cells. By activating DCs, could potentially contribute to the initiation of innate immune responses during tuberculosis infection and hence regulate the clinical course of tuberculosis. Involved in resistance to oxidative stress, via TLR2-dependent activation of the PI3K-ERK1/2-NF-kappa-B signaling pathway and expression of COX-2 and Bcl2. Also abolishes H(2)O(2)-triggered activation of p38 MAPK. The chain is PE-PGRS family protein PE_PGRS11 from Mycobacterium tuberculosis (strain ATCC 25618 / H37Rv).